A 76-amino-acid chain; its full sequence is ATP synthase subunit c (76 aa).

2 consecutive transmembrane segments (helical) span residues 13 to 33 (LNVVGYGLAAIGPGIGLGILI) and 55 to 75 (FLGLAFVEVLALLGFVAAFIF).

This sequence belongs to the ATPase C chain family. F-type ATPases have 2 components, F(1) - the catalytic core - and F(0) - the membrane proton channel. F(1) has five subunits: alpha(3), beta(3), gamma(1), delta(1), epsilon(1). F(0) has three main subunits: a(1), b(2) and c(10-14). The alpha and beta chains form an alternating ring which encloses part of the gamma chain. F(1) is attached to F(0) by a central stalk formed by the gamma and epsilon chains, while a peripheral stalk is formed by the delta and b chains.

It localises to the cell membrane. F(1)F(0) ATP synthase produces ATP from ADP in the presence of a proton or sodium gradient. F-type ATPases consist of two structural domains, F(1) containing the extramembraneous catalytic core and F(0) containing the membrane proton channel, linked together by a central stalk and a peripheral stalk. During catalysis, ATP synthesis in the catalytic domain of F(1) is coupled via a rotary mechanism of the central stalk subunits to proton translocation. In terms of biological role, key component of the F(0) channel; it plays a direct role in translocation across the membrane. A homomeric c-ring of between 10-14 subunits forms the central stalk rotor element with the F(1) delta and epsilon subunits. The chain is ATP synthase subunit c from Bifidobacterium animalis subsp. lactis (strain AD011).